Reading from the N-terminus, the 111-residue chain is Ig kappa chain V region 3368 (111 aa).

The tract at residues 1 to 24 (ADIVMTQTPSSVSAAVGGTVTIKC) is framework-1. Residues 25–35 (QASESIGNELA) form a complementarity-determining-1 region. The tract at residues 36-50 (WYQQKPGQPPKLLIY) is framework-2. The tract at residues 51–57 (RASKLAS) is complementarity-determining-2. The tract at residues 58–89 (GVSSRFKGSGSGTEFTLTISGVQCDDAGIYYC) is framework-3. The interval 90–101 (QQDWNSNNVVNN) is complementarity-determining-3. The tract at residues 102–111 (FGGGTEVVVK) is framework-4.

The sequence is that of Ig kappa chain V region 3368 from Oryctolagus cuniculus (Rabbit).